An 86-amino-acid chain; its full sequence is Photosystem I reaction center subunit PsaK 1 (86 aa).

A propeptide spanning residues 1–8 (MLTSTLLA) is cleaved from the precursor. 2 consecutive transmembrane segments (helical) span residues 14-34 (LEWS…AITF) and 60-80 (PALL…VLGL).

It belongs to the PsaG/PsaK family. In terms of assembly, the cyanobacterial PSI reaction center is composed of one copy each of PsaA,B,C,D,E,F,I,J,K,L,M and X, and forms dimeric and tetrameric complexes.

It localises to the cellular thylakoid membrane. In Nostoc sp. (strain PCC 7120 / SAG 25.82 / UTEX 2576), this protein is Photosystem I reaction center subunit PsaK 1 (psaK1).